We begin with the raw amino-acid sequence, 470 residues long: Proton-coupled amino acid transporter 3 (470 aa).

The Cytoplasmic portion of the chain corresponds to 1–46; that stretch reads MSLLGRDYNSELNSLDNGPQSPSESSSSITSENVHPAGEAGLSMMQ. A compositionally biased stretch (polar residues) spans 10 to 20; sequence SELNSLDNGPQ. The interval 10–33 is disordered; the sequence is SELNSLDNGPQSPSESSSSITSEN. Low complexity predominate over residues 21-31; it reads SPSESSSSITS. A helical transmembrane segment spans residues 47–67; it reads TLIHLLKCNIGTGLLGLPLAI. Topologically, residues 68 to 71 are extracellular; the sequence is KNAG. Residues 72–92 form a helical membrane-spanning segment; that stretch reads LLVGPVSLLAIGVLTVHCMVI. At 93 to 137 the chain is on the cytoplasmic side; sequence LLNCAQHLSQRLQKTFVNYGEATMYGLETCPNTWLRAHAVWGRYT. A helical membrane pass occupies residues 138–158; it reads VSFLLVITQLGFCSVYFMFMA. Topologically, residues 159–185 are extracellular; it reads DNLQQMVEKAHVTSNICQPREILTLTP. A helical membrane pass occupies residues 186 to 206; sequence ILDIRFYMLIILPFLILLVFI. At 207-210 the chain is on the cytoplasmic side; that stretch reads QNLK. Residues 211–231 traverse the membrane as a helical segment; it reads VLSVFSTLANITTLGSMALIF. At 232–252 the chain is on the extracellular side; that stretch reads EYIMEGIPYPSNLPLMANWKT. Residues 253 to 273 form a helical membrane-spanning segment; it reads FLLFFGTAIFTFEGVGMVLPL. Over 274–284 the chain is Cytoplasmic; it reads KNQMKHPQQFS. Residues 285–305 traverse the membrane as a helical segment; that stretch reads FVLYLGMSIVIILYILLGTLG. Over 306–337 the chain is Extracellular; that stretch reads YMKFGSDTQASITLNLPNCWLYQSVKLMYSIG. The helical transmembrane segment at 338–358 threads the bilayer; that stretch reads IFFTYALQFHVPAEIIIPFAI. The Cytoplasmic portion of the chain corresponds to 359 to 367; sequence SQVSESWAL. The chain crosses the membrane as a helical span at residues 368–388; the sequence is FVDLSVRSALVCLTCVSAILI. Residues 389–392 are Extracellular-facing; sequence PRLD. The helical transmembrane segment at 393-413 threads the bilayer; that stretch reads LVISLVGSVSSSALALIIPAL. The Cytoplasmic portion of the chain corresponds to 414 to 425; that stretch reads LEIVIFYSEDMS. A helical membrane pass occupies residues 426-446; that stretch reads CVTIAKDIMISIVGLLGCIFG. Residues 447-470 lie on the Extracellular side of the membrane; it reads TYQALYELPQPISHSMANSTGVHA.

This sequence belongs to the amino acid/polyamine transporter 2 family. In terms of tissue distribution, specifically expressed in testis.

The protein localises to the membrane. The protein is Proton-coupled amino acid transporter 3 (SLC36A3) of Homo sapiens (Human).